We begin with the raw amino-acid sequence, 601 residues long: Elongation factor 4 (601 aa).

Positions 5 to 187 constitute a tr-type G domain; that stretch reads DKIRNFSIIA…SIVKDLPAPQ (183 aa). Residues 17-22 and 134-137 contribute to the GTP site; these read DHGKST and NKVD.

It belongs to the TRAFAC class translation factor GTPase superfamily. Classic translation factor GTPase family. LepA subfamily.

The protein localises to the cell inner membrane. The enzyme catalyses GTP + H2O = GDP + phosphate + H(+). In terms of biological role, required for accurate and efficient protein synthesis under certain stress conditions. May act as a fidelity factor of the translation reaction, by catalyzing a one-codon backward translocation of tRNAs on improperly translocated ribosomes. Back-translocation proceeds from a post-translocation (POST) complex to a pre-translocation (PRE) complex, thus giving elongation factor G a second chance to translocate the tRNAs correctly. Binds to ribosomes in a GTP-dependent manner. In Maridesulfovibrio salexigens (strain ATCC 14822 / DSM 2638 / NCIMB 8403 / VKM B-1763) (Desulfovibrio salexigens), this protein is Elongation factor 4.